The following is a 131-amino-acid chain: Con-Ins Q1b (131 aa).

An N-terminal signal peptide occupies residues 1–24; sequence MTTSSYFLLVALGLLLYLCQSSFG. Disulfide bonds link C29–C107, C41–C110, C53–C123, and C109–C114. Positions 59-92 are cleaved as a propeptide — c peptide; the sequence is LQGGTDDARKKRGRASLLRKRRGFLSMLKARAKR. E118 bears the 4-carboxyglutamate; partial mark. Serine amide is present on S130.

The protein belongs to the insulin family. Heterodimer of A and B chains; disulfide-linked. Expressed by the venom gland.

Its subcellular location is the secreted. Its function is as follows. This venom insulin facilitates prey capture by rapidly inducing hypoglycemic shock. Intraperitoneal injection of this peptide into zebrafish lowers blood glucose with the same potency than human insulin. In vivo, when applied to water, this peptide reduces overall locomotor activity of zebrafish larvae, observed as a significant decrease in the percentage of time spent swimming and movement frequency. The sequence is that of Con-Ins Q1b from Conus quercinus (Oak cone).